We begin with the raw amino-acid sequence, 264 residues long: MHQYQDLLEHILSDGAEKHDRTGTGTLSVFGHQMRFDLAAGFPMLTTKKLPFKAIVHELLWFLAGDTNVRYLQNNGVSIWDEWADANGDLGPVYGKQWRSWQAPDGRSIDQITNLVQMIRTNPDSRRLIVTAWNPADVEQMALPPCHCLFQFYVANGRLSCQLYQRSADVFLGVPFNIASYALLMMMIAQVTDLAPGHFVHTFGDAHLYSNHLDQARLQLTRAPRALPTLRINPAVRDIFGFRYEDFKLENYDPHPHIKAEVAV.

DUMP contacts are provided by residues arginine 21 and 126 to 127 (RR). Residue cysteine 146 is the Nucleophile of the active site. DUMP contacts are provided by residues 166–169 (RSAD), asparagine 177, and 207–209 (HLY). (6R)-5,10-methylene-5,6,7,8-tetrahydrofolate is bound at residue aspartate 169. Position 263 (alanine 263) interacts with (6R)-5,10-methylene-5,6,7,8-tetrahydrofolate.

The protein belongs to the thymidylate synthase family. Bacterial-type ThyA subfamily. As to quaternary structure, homodimer.

Its subcellular location is the cytoplasm. It carries out the reaction dUMP + (6R)-5,10-methylene-5,6,7,8-tetrahydrofolate = 7,8-dihydrofolate + dTMP. Its pathway is pyrimidine metabolism; dTTP biosynthesis. Functionally, catalyzes the reductive methylation of 2'-deoxyuridine-5'-monophosphate (dUMP) to 2'-deoxythymidine-5'-monophosphate (dTMP) while utilizing 5,10-methylenetetrahydrofolate (mTHF) as the methyl donor and reductant in the reaction, yielding dihydrofolate (DHF) as a by-product. This enzymatic reaction provides an intracellular de novo source of dTMP, an essential precursor for DNA biosynthesis. The protein is Thymidylate synthase of Afipia carboxidovorans (strain ATCC 49405 / DSM 1227 / KCTC 32145 / OM5) (Oligotropha carboxidovorans).